The primary structure comprises 163 residues: Large ribosomal subunit protein uL10 (163 aa).

The protein belongs to the universal ribosomal protein uL10 family. Part of the ribosomal stalk of the 50S ribosomal subunit. The N-terminus interacts with L11 and the large rRNA to form the base of the stalk. The C-terminus forms an elongated spine to which L12 dimers bind in a sequential fashion forming a multimeric L10(L12)X complex.

In terms of biological role, forms part of the ribosomal stalk, playing a central role in the interaction of the ribosome with GTP-bound translation factors. This chain is Large ribosomal subunit protein uL10 (rplJ), found in Haemophilus influenzae (strain ATCC 51907 / DSM 11121 / KW20 / Rd).